A 179-amino-acid polypeptide reads, in one-letter code: Cytochrome c-type biogenesis protein CcmE (179 aa).

At 1–8 (MTPRRKSR) the chain is on the cytoplasmic side. Residues 9-29 (MTVILFVLLGISIASALVLYA) traverse the membrane as a helical; Signal-anchor for type II membrane protein segment. Residues 30–179 (LRQNIDLFYT…QKTSMQEGQK (150 aa)) are Periplasmic-facing. Residues histidine 131 and tyrosine 135 each contribute to the heme site. A disordered region spans residues 151-179 (MGVADLKGESERDRQEKAYQKTSMQEGQK). The segment covering 156 to 169 (LKGESERDRQEKAY) has biased composition (basic and acidic residues). Residues 170–179 (QKTSMQEGQK) are compositionally biased toward polar residues.

Belongs to the CcmE/CycJ family.

Its subcellular location is the cell inner membrane. In terms of biological role, heme chaperone required for the biogenesis of c-type cytochromes. Transiently binds heme delivered by CcmC and transfers the heme to apo-cytochromes in a process facilitated by CcmF and CcmH. This is Cytochrome c-type biogenesis protein CcmE from Pasteurella multocida (strain Pm70).